Consider the following 2442-residue polypeptide: Histone lysine acetyltransferase CREBBP (2442 aa).

2 disordered regions span residues 1-40 (MAENLLDGPPNPKRAKLSSPGFSANDSTDFGSLFDLENDL) and 74-168 (RGGS…PATS). Ala-2 bears the N-acetylalanine mark. Residues 20-30 (PGFSANDSTDF) show a composition bias toward polar residues. Ser-120 carries the phosphoserine modification. Residues 125–168 (GDSSTPSLPKQAASTSGPTPPASQALNPQAQKQVGLVTSSPATS) are compositionally biased toward polar residues. Arg-219 is subject to Omega-N-methylarginine. Residues 226 to 409 (PAPAMQGATS…GKACQVAHCA (184 aa)) form an interaction with SRCAP region. Residues 261 to 272 (GGMTKMGMTGNT) show a composition bias toward low complexity. The disordered stretch occupies residues 261 to 290 (GGMTKMGMTGNTSPFGQPFSQTGGQPMGAT). The segment covering 273–284 (SPFGQPFSQTGG) has biased composition (polar residues). Residues 346–432 (DPEKRKLIQQ…RHDCPVCLPL (87 aa)) form a TAZ-type 1 zinc finger. Zn(2+) is bound by residues His-362, Cys-366, Cys-379, Cys-384, His-393, Cys-397, Cys-403, Cys-408, His-417, Cys-421, Cys-426, and Cys-429. Positions 586–665 (GVRKGWHEHV…KIYKIQKELE (80 aa)) constitute a KIX domain. Asymmetric dimethylarginine occurs at positions 600 and 624. The residue at position 656 (Lys-656) is an N6-acetyllysine. A compositionally biased stretch (polar residues) spans 792–825 (FLPQNQFPSSSGAMSVNSVGMGQPATQAGVSQGQ). The tract at residues 792–1084 (FLPQNQFPSS…STSPSQPRKK (293 aa)) is disordered. Composition is skewed to pro residues over residues 846 to 862 (PCPPVTQSPLHPTPPPA) and 874 to 887 (PTPPGMTPPQPAAP). Positions 894–906 (VSSGQTPTPTPGS) are enriched in polar residues. Low complexity-rich tracts occupy residues 909-930 (SAAQTQSTPTVQAAAQAQVTPQ) and 938-957 (PSVATPQSSQQQPTPVHTQP). The segment covering 974–989 (PTPSSVTSAETSSQQP) has biased composition (polar residues). Lys-999 is covalently cross-linked (Glycyl lysine isopeptide (Lys-Gly) (interchain with G-Cter in SUMO1)). The span at 1012–1022 (AESKGEPRSEM) shows a compositional bias: basic and acidic residues. Lys-1015 bears the N6-acetyllysine mark. At Ser-1031 the chain carries Phosphoserine. Residues 1033-1060 (VKEETDTTEQKSEPMEVEEKKPEVKVEA) are compositionally biased toward basic and acidic residues. Residues Lys-1034 and Lys-1057 each participate in a glycyl lysine isopeptide (Lys-Gly) (interchain with G-Cter in SUMO1) cross-link. The span at 1067–1080 (SANGTASQSTSPSQ) shows a compositional bias: polar residues. Ser-1077 is subject to Phosphoserine. Residues 1086 to 1193 (FKPEELRQAL…EVFEQEIDPV (108 aa)) form the Bromo domain. Residues 1125-1171 (DYFDIVKNPMDLSTIKRKLDTGQYQEPWQYVDDVWLMFNNAWLYNRK) are interaction with histone. The interval 1163–1181 (NNAWLYNRKTSRVYKFCSK) is interaction with ASF1A. At Lys-1217 the chain carries N6-acetyllysine. Residues 1324–1701 (KFSAKRLQTT…MLVELHTQGQ (378 aa)) form the CBP/p300-type HAT domain. Residues Ser-1383 and Ser-1387 each carry the phosphoserine; by IKKA modification. The interaction with histone stretch occupies residues 1434–1436 (YLD). Residues 1435–1437 (LDS), 1447–1448 (RT), Ile-1494, Arg-1499, and Trp-1503 contribute to the acetyl-CoA site. The stretch at 1548–1575 (NVLEESIKELEQEEEERKKEESTAASET) forms a coiled coil. Over residues 1557-1569 (LEQEEEERKKEES) the composition is skewed to basic and acidic residues. Residues 1557–1616 (LEQEEEERKKEESTAASETPEGSQGDSKNAKKKNNKKTNKNKSSISRANKKKPSMPNVSN) form a disordered region. Residues Lys-1584, Lys-1592, Lys-1593, Lys-1596, and Lys-1598 each carry the N6-acetyllysine modification. A compositionally biased stretch (basic residues) spans 1586–1596 (AKKKNNKKTNK). Residues 1703–1751 (RFVYTCNECKHHVETRWHCTVCEDYDLCINCYNTKSHTHKMVKWGLGLD) form a ZZ-type zinc finger. Positions 1708, 1711, 1721, 1724, 1730, 1733, 1739, and 1741 each coordinate Zn(2+). 2 positions are modified to N6-acetyllysine: Lys-1742 and Lys-1745. Phosphoserine is present on Ser-1764. A TAZ-type 2 zinc finger spans residues 1766–1847 (QESRRLSIQR…KCPVPFCLNI (82 aa)). Positions 1875-1960 (TRNVPQQSLP…QPPPAAVEAA (86 aa)) are disordered. 2 stretches are compositionally biased toward pro residues: residues 1901–1913 (PQTPQPPAQPQPS) and 1944–1955 (PAPPPPAQPPPA). Phosphoserine is present on residues Ser-2064, Ser-2077, and Ser-2080. The tract at residues 2112 to 2421 (NQPGMQPQPG…LNTPNRSALS (310 aa)) is disordered. Composition is skewed to low complexity over residues 2113–2138 (QPGMQPQPGLQSQPGMQPQPGMHQQP), 2197–2217 (QLLQHQQQQQQQQQQQQQQQQ), 2261–2280 (MGQMAAPMGQLGQMGQPGLG), and 2287–2305 (IQQALQQRILQQQQMKQQI). Polar residues-rich tracts occupy residues 2315 to 2327 (SPQQHMLSGQPQA) and 2334 to 2343 (QIATSLSNQV). The segment covering 2349–2372 (VQSPRPQSQPPHSSPSPRIQPQPS) has biased composition (pro residues). A Phosphoserine modification is found at Ser-2351. Over residues 2411–2421 (QLNTPNRSALS) the composition is skewed to polar residues.

Part of a complex composed of MSX3, CREBBP/CBP AND EP300/p300; the interaction with MSX3 decreases histone acetylation activity. Found in a complex containing NCOA2; NCOA3; IKKA; IKKB and IKBKG. Probably part of a complex with HIF1A and EP300. Interacts with phosphorylated CREB1. Interacts with the C-terminal region of CITED4. The TAZ-type 1 domain interacts with HIF1A. Interacts with SRCAP, CARM1, ELF3, MLLT7/FOXO4, N4BP2, NCOA1, NCOA3, NCOA6, PCAF, DDX5, DDX17, PELP1, PML, SMAD1, SMAD2, SMAD3, SPIB, TRERF1 and ZCCHC12. Interacts with KLF1; the interaction results in acetylation and enhancement of transcriptional activity of KLF1. Interacts with DAXX; the interaction is dependent on CBP sumoylation and results in suppression of the transcriptional activity via recruitment of HDAC2 to DAXX. Interacts with MAF. Interacts with MTDH. Interacts with MAFG; the interaction acetylates MAFG in the basic region and stimulates NFE2 transcriptional activity through increasing its DNA-binding activity. Interacts with IRF2; the interaction acetylates IRF2 and regulates its activity on the H4 promoter. Interacts (via N-terminus) with SS18L1/CREST (via C-terminus). Interacts with IRF3 (when phosphorylated); forming the dsRNA-activated factor 1 (DRAF1), a complex which activates the transcription of the type I interferon genes. Interacts with MECOM. Interacts with CITED1 (via C-terminus) Interacts with GATA1; the interaction results in acetylation and enhancement of transcriptional activity of GATA1. Interacts with FOXO1; the interaction acetylates FOXO1 and inhibits its transcriptional activity. Interacts with NPAS2, CLOCK and BMAL1. Interacts with ASF1A and ASF1B; this promotes histone acetylation. Interacts with acetylated TP53/p53 and with the acetylated histones H3 and H4. Interacts (via transactivation domain and C-terminus) with PCNA; the interaction occurs on chromatin in UV-irradiated damaged cells. Interacts with DHX9 (via N-terminus); this interaction mediates association with RNA polymerase II holoenzyme and stimulates CREB-dependent transcriptional activation. Interacts with SMAD4; negatively regulated by ZBTB7A. Forms a complex with KMT2A and CREB1. Interacts with DDX3X; this interaction may facilitate HNF4A acetylation. Interacts with MSX1; the interaction may inhibit MSX1 autoinactivation. Interacts with MSX3. Interacts with ACSS2. In terms of processing, methylation of the KIX domain by CARM1 blocks association with CREB. This results in the blockade of CREB signaling, and in activation of apoptotic response. Post-translationally, phosphorylated by CHUK/IKKA at Ser-1383 and Ser-1387; these phosphorylations promote cell growth by switching the binding preference of CREBBP from TP53 to NF-kappa-B. Sumoylation negatively regulates transcriptional activity via the recruitment of DAAX. In terms of processing, autoacetylation is required for binding to protein substrates, such as acetylated histones and acetylated TP53/p53. Autoacetylation is induced by glucose and fatty acids. Expressed in hypothalamus and cortex.

It localises to the cytoplasm. The protein resides in the nucleus. The enzyme catalyses L-lysyl-[histone] + acetyl-CoA = N(6)-acetyl-L-lysyl-[histone] + CoA + H(+). The catalysed reaction is L-lysyl-[protein] + acetyl-CoA = N(6)-acetyl-L-lysyl-[protein] + CoA + H(+). It catalyses the reaction (S)-lactoyl-CoA + L-lysyl-[protein] = N(6)-[(S)-lactoyl]-L-lysyl-[protein] + CoA + H(+). In terms of biological role, acetylates histones, giving a specific tag for transcriptional activation. Mediates acetylation of histone H3 at 'Lys-18' and 'Lys-27' (H3K18ac and H3K27ac, respectively). Also acetylates non-histone proteins, like DDX21, FBL, IRF2, MAFG, NCOA3, POLR1E/PAF53 and FOXO1. Binds specifically to phosphorylated CREB and enhances its transcriptional activity toward cAMP-responsive genes. Acts as a coactivator of ALX1. Acts as a circadian transcriptional coactivator which enhances the activity of the circadian transcriptional activators: NPAS2-BMAL1 and CLOCK-BMAL1 heterodimers. Acetylates PCNA; acetylation promotes removal of chromatin-bound PCNA and its degradation during nucleotide excision repair (NER). Acetylates POLR1E/PAF53, leading to decreased association of RNA polymerase I with the rDNA promoter region and coding region. Acetylates DDX21, thereby inhibiting DDX21 helicase activity. Acetylates FBL, preventing methylation of 'Gln-105' of histone H2A (H2AQ104me). In addition to protein acetyltransferase, can use different acyl-CoA substrates, such as lactoyl-CoA, and is able to mediate protein lactylation. Catalyzes lactylation of MRE11 in response to DNA damage, thereby promoting DNA double-strand breaks (DSBs) via homologous recombination (HR). Functions as a transcriptional coactivator for SMAD4 in the TGF-beta signaling pathway. The protein is Histone lysine acetyltransferase CREBBP (Crebbp) of Rattus norvegicus (Rat).